A 666-amino-acid polypeptide reads, in one-letter code: Secreted protein ARB_01864 (666 aa).

The signal sequence occupies residues Met1–Ala18. N-linked (GlcNAc...) asparagine glycans are attached at residues Asn160, Asn216, Asn342, Asn405, Asn594, Asn600, and Asn662. The segment at Arg323–Pro353 is disordered.

It localises to the secreted. In Arthroderma benhamiae (strain ATCC MYA-4681 / CBS 112371) (Trichophyton mentagrophytes), this protein is Secreted protein ARB_01864.